The following is a 513-amino-acid chain: Bifunctional purine biosynthesis protein PurH (513 aa).

One can recognise an MGS-like domain in the interval 1 to 144; that stretch reads MKRALVSVSD…KNYRDVTIVV (144 aa).

This sequence belongs to the PurH family.

The enzyme catalyses (6R)-10-formyltetrahydrofolate + 5-amino-1-(5-phospho-beta-D-ribosyl)imidazole-4-carboxamide = 5-formamido-1-(5-phospho-D-ribosyl)imidazole-4-carboxamide + (6S)-5,6,7,8-tetrahydrofolate. The catalysed reaction is IMP + H2O = 5-formamido-1-(5-phospho-D-ribosyl)imidazole-4-carboxamide. It functions in the pathway purine metabolism; IMP biosynthesis via de novo pathway; 5-formamido-1-(5-phospho-D-ribosyl)imidazole-4-carboxamide from 5-amino-1-(5-phospho-D-ribosyl)imidazole-4-carboxamide (10-formyl THF route): step 1/1. Its pathway is purine metabolism; IMP biosynthesis via de novo pathway; IMP from 5-formamido-1-(5-phospho-D-ribosyl)imidazole-4-carboxamide: step 1/1. The protein is Bifunctional purine biosynthesis protein PurH of Lactobacillus delbrueckii subsp. bulgaricus (strain ATCC BAA-365 / Lb-18).